Reading from the N-terminus, the 579-residue chain is Glypican-3 (579 aa).

The signal sequence occupies residues 1-24 (MAGTVRTACLLVAMLLGLGCLGQA). Gln-25 carries the post-translational modification Pyrrolidone carboxylic acid. Disulfide bonds link Cys-34–Cys-71, Cys-64–Cys-261, Cys-72–Cys-264, Cys-196–Cys-348, Cys-251–Cys-284, Cys-273–Cys-421, and Cys-277–Cys-409. Residues Asn-123 and Asn-240 are each glycosylated (N-linked (GlcNAc...) asparagine). At Ser-351 the chain carries Phosphoserine. An N-linked (GlcNAc...) asparagine glycan is attached at Asn-417. O-linked (Xyl...) (glycosaminoglycan) serine glycosylation is found at Ser-494 and Ser-508. The interval 533–552 (DAPGNKQHGNQKDNEITTSH) is disordered. The GPI-anchor amidated serine moiety is linked to residue Ser-553. The propeptide at 554–579 (VGNMPSPLKILISVAIYVACFFFLVH) is removed in mature form.

This sequence belongs to the glypican family. In terms of assembly, heterodimer; disulfide-linked. Cleavage by a furin-like convertase results in production of alpha and beta chains which form a disulfide-linked heterodimer. Interacts with DPP4. Interacts with FGF2. Interacts with WNT5A. Also interacts with WNT3A and WNT7B. Interacts with hedgehog protein SHH; the heparan sulfate chains are not required for the interaction. Also interacts with hedgehog protein IHH. Interacts with CD81. Interacts with Wnt receptors FZD4, FZD7 and FZD8; the heparan sulfate chains are required for the interaction. O-glycosylated; contains heparan sulfate and/or chondroitin sulfate. Post-translationally, cleaved intracellularly by a furin-like convertase to generate 2 subunits, alpha and beta, which remain associated through disulfide bonds and are associated with the cell surface via the GPI-anchor. This processing is essential for its role in inhibition of hedgehog signaling. A second proteolytic event may result in cleavage of the protein on the cell surface, separating it from the GPI-anchor and leading to its shedding from the cell surface. As to expression, in the developing limb, absent from the apical epidermal ridge at 11 dpc but highly expressed in the underlying mesenchyme. Expression in the mesenchyme at this stage is asymmetric with highest levels in the regions of the distal mesenchyme within the progress zone and within the proximal anterior and posterior limb bud. At later developmental stages including 12.5 and 13.5 dpc, expression is restricted to the interdigital webs and the regions of chondrocytic differentiation of the developing bones. In the embryonic kidney, expressed in both the ureteric bud and mesenchymal cells as early as 13.5 dpc. Expression at 16.5 dpc is similar to that at 13.5 dpc but decreases by 18.5 dpc.

The protein resides in the cell membrane. Functionally, cell surface proteoglycan. Negatively regulates the hedgehog signaling pathway when attached via the GPI-anchor to the cell surface by competing with the hedgehog receptor PTC1 for binding to hedgehog proteins. Binding to the hedgehog protein SHH triggers internalization of the complex by endocytosis and its subsequent lysosomal degradation. Positively regulates the canonical Wnt signaling pathway by binding to the Wnt receptor Frizzled and stimulating the binding of the Frizzled receptor to Wnt ligands. Positively regulates the non-canonical Wnt signaling pathway. Binds to CD81 which decreases the availability of free CD81 for binding to the transcriptional repressor HHEX, resulting in nuclear translocation of HHEX and transcriptional repression. Inhibits the dipeptidyl peptidase activity of DPP4. Plays a role in limb patterning and skeletal development by controlling the cellular response to BMP4. Modulates the effects of growth factors BMP2, BMP7 and FGF7 on renal branching morphogenesis. Required for coronary vascular development. Plays a role in regulating cell movements during gastrulation. The chain is Glypican-3 (Gpc3) from Mus musculus (Mouse).